The chain runs to 395 residues: Hdr-like menaquinol oxidoreductase integral membrane subunit (395 aa).

Transmembrane regions (helical) follow at residues 15–35, 57–77, 88–108, 126–146, 158–178, 196–216, 231–251, 274–294, 305–325, and 364–384; these read YFAL…AYVL, IPYF…AGVF, IAAY…ALDI, IFSW…IYLL, FMAG…GAIY, FIVC…YFTF, LALI…VEGL, VFWS…IIVL, ITFA…YLII, and IGLI…FALI.

Belongs to the NrfD family. Consists of five subunits: an integral membrane subunit, a cytochrome b-like subunit, a cytochrome c subunit and two iron-sulfur subunits.

The protein resides in the cell membrane. Has menaquinol-oxidizing activity. HmeB subunit may function as a menaquinol-oxidizing site. HmeA, HmeB and HmeE subunits may together catalyze electron transfer from menaquinol to cytochrome c. This chain is Hdr-like menaquinol oxidoreductase integral membrane subunit (hmeB), found in Archaeoglobus fulgidus (strain ATCC 49558 / DSM 4304 / JCM 9628 / NBRC 100126 / VC-16).